A 446-amino-acid chain; its full sequence is Baeyer-Villiger monooxygenase dmxR6 (446 aa).

This sequence belongs to the AflY oxidoreductase family.

Its pathway is secondary metabolite biosynthesis. Baeyer-Villiger monooxygenase; part of the gene cluster that mediates the biosynthesis of the dimeric xanthones cryptosporioptides. The pathway begins with the synthesis of atrochrysone thioester by the polyketide synthase dmx-nrPKS. The atrochrysone carboxyl ACP thioesterase dmxR1 then breaks the thioester bond and releases the atrochrysone carboxylic acid from dmx-nrPKS. Atrochrysone carboxylic acid is decarboxylated by the decarboxylase dmxR15, and oxidized by the anthrone oxygenase dmxR16 to yield emodin. Emodin is then reduced to emodin hydroquinone by the oxidoreductase dmxR7. A-ring reduction by the short chain dehydrogenase dmxR18, dehydration by the scytalone dehydratase-like protein dmxR17 and probable spontaneous re-oxidation, results in overall deoxygenation to chrysophanol. Baeyer-Villiger oxidation by the Baeyer-Villiger monooxygenase (BVMO) dmxR6 then yields monodictylactone in equilibrium with monodictyphenone. In the case of the cryptosporioptides biosynthesis, monodictylactone is reduced at C-12 to an alcohol (by the short chain dehydrogenases dmxR12 or dmxR8) and hydroxylated at C-5 by dmxR9, yielding the electron-rich aromatic which could eliminate H(2)O to form the ortho-quinonemethide, followed by tautomerisation to paraquinone and complete the formal reduction to produce the 10-methylgroup. Conjugate addition of C-4a-OH to the resulting paraquinone by the monooxygenase dmxR10 then gives cyclohexadienone, which is then reduced at C-5 by the short chain dehydrogenase dmxR3 to give the dihydroxanthone. The 6,7-epoxide in the cryptosporioptides could be introduced by the cytochrome P450 monooxygenase dmxL3. The highly reducing PKS dmxL2 manufactures butyrate, which is further carboxylated by dmxL1 to form ethylmalonate. It is not yet clear whether the carboxylation occurs while the butyrate is attached to the ACP of dmxL2, but this unusual fungal metabolite could then be esterified to O-5 by the O-acetyltransferase dmxR13. Finally, dimerization performed by dmxR5 gives the observed dimers cryptosporioptides A, B and C as the final products of the pathway. This is Baeyer-Villiger monooxygenase dmxR6 from Cryptosporiopsis sp. (strain 8999).